A 144-amino-acid polypeptide reads, in one-letter code: 6-pyruvoyl tetrahydrobiopterin synthase (144 aa).

Positions 1–4 (MNAA) are excised as a propeptide. A Phosphoserine modification is found at S18. H23 contributes to the Zn(2+) binding site. The residue at position 27 (S27) is a Phosphoserine. C42 acts as the Proton acceptor in catalysis. Zn(2+) is bound by residues H48 and H50. H89 functions as the Charge relay system in the catalytic mechanism. Position 127 is a phosphotyrosine (Y127). E133 acts as the Charge relay system in catalysis.

This sequence belongs to the PTPS family. In terms of assembly, homohexamer formed of two homotrimers in a head to head fashion. Requires Zn(2+) as cofactor. In terms of processing, phosphorylation of Ser-18 is required for maximal enzyme activity.

The catalysed reaction is 7,8-dihydroneopterin 3'-triphosphate = 6-pyruvoyl-5,6,7,8-tetrahydropterin + triphosphate + H(+). The protein operates within cofactor biosynthesis; tetrahydrobiopterin biosynthesis; tetrahydrobiopterin from 7,8-dihydroneopterin triphosphate: step 1/3. Involved in the biosynthesis of tetrahydrobiopterin, an essential cofactor of aromatic amino acid hydroxylases. Catalyzes the transformation of 7,8-dihydroneopterin triphosphate into 6-pyruvoyl tetrahydropterin. The protein is 6-pyruvoyl tetrahydrobiopterin synthase (Pts) of Rattus norvegicus (Rat).